The chain runs to 205 residues: Urease accessory protein UreG (205 aa).

11–18 (GPVGSGKT) serves as a coordination point for GTP.

This sequence belongs to the SIMIBI class G3E GTPase family. UreG subfamily. As to quaternary structure, homodimer. UreD, UreF and UreG form a complex that acts as a GTP-hydrolysis-dependent molecular chaperone, activating the urease apoprotein by helping to assemble the nickel containing metallocenter of UreC. The UreE protein probably delivers the nickel.

It localises to the cytoplasm. Its function is as follows. Facilitates the functional incorporation of the urease nickel metallocenter. This process requires GTP hydrolysis, probably effectuated by UreG. This is Urease accessory protein UreG from Prochlorococcus marinus (strain NATL1A).